Consider the following 360-residue polypeptide: Probable dual-specificity RNA methyltransferase RlmN (360 aa).

Glutamate 97 serves as the catalytic Proton acceptor. One can recognise a Radical SAM core domain in the interval 103-330; sequence DGDRLTFCIS…TAVRRSRGLD (228 aa). Cysteine 110 and cysteine 335 are disulfide-bonded. Residues cysteine 117, cysteine 121, and cysteine 124 each coordinate [4Fe-4S] cluster. S-adenosyl-L-methionine contacts are provided by residues 165–166, serine 197, 220–222, and histidine 292; these read GE and SIH. The active-site S-methylcysteine intermediate is the cysteine 335.

Belongs to the radical SAM superfamily. RlmN family. Requires [4Fe-4S] cluster as cofactor.

The protein resides in the cytoplasm. It catalyses the reaction adenosine(2503) in 23S rRNA + 2 reduced [2Fe-2S]-[ferredoxin] + 2 S-adenosyl-L-methionine = 2-methyladenosine(2503) in 23S rRNA + 5'-deoxyadenosine + L-methionine + 2 oxidized [2Fe-2S]-[ferredoxin] + S-adenosyl-L-homocysteine. The enzyme catalyses adenosine(37) in tRNA + 2 reduced [2Fe-2S]-[ferredoxin] + 2 S-adenosyl-L-methionine = 2-methyladenosine(37) in tRNA + 5'-deoxyadenosine + L-methionine + 2 oxidized [2Fe-2S]-[ferredoxin] + S-adenosyl-L-homocysteine. Its function is as follows. Specifically methylates position 2 of adenine 2503 in 23S rRNA and position 2 of adenine 37 in tRNAs. The protein is Probable dual-specificity RNA methyltransferase RlmN of Gemmatimonas aurantiaca (strain DSM 14586 / JCM 11422 / NBRC 100505 / T-27).